The chain runs to 72 residues: HADGVFTSDFSRLLGQLSAKKYLESLIXXXXXXXXXXXXXXXXXHSDAVFTDNYTRLRKQMAVKKYLNSILN.

I27 carries the isoleucine amide modification. N72 is subject to Asparagine amide.

It belongs to the glucagon family.

The protein localises to the secreted. Its function is as follows. VIP is a neuropeptide involved in a diverse array of physiological processes through activating the PACAP subfamily of class B1 G protein-coupled receptors: VIP receptor 1 (VPR1) and VIP receptor 2 (VPR2). Abundantly expressed throughout the CNS and peripheral nervous systems where they primarily exert neuroprotective and immune modulatory roles. Also causes vasodilation, lowers arterial blood pressure, stimulates myocardial contractility, increases glycogenolysis and relaxes the smooth muscle of trachea, stomach and gall bladder. Functionally, PHM-27 is a bioactive form from proteolysis of the same precursor protein, that causes vasodilation. It is a potent agonist of the calcitonin receptor CALCR, with similar efficacy as calcitonin. The sequence is that of VIP peptides (VIP) from Oryctolagus cuniculus (Rabbit).